A 79-amino-acid chain; its full sequence is MSEIADKVKKIVVEHLGVEESKVTPEASFIDDLGADSLDTVELVMAFEEAFSVEIPEDAAEKIATVKDAIDYIEKQKAA.

The Carrier domain maps to 2-77; it reads SEIADKVKKI…DAIDYIEKQK (76 aa). Serine 37 carries the post-translational modification O-(pantetheine 4'-phosphoryl)serine.

Belongs to the acyl carrier protein (ACP) family. In terms of processing, 4'-phosphopantetheine is transferred from CoA to a specific serine of apo-ACP by AcpS. This modification is essential for activity because fatty acids are bound in thioester linkage to the sulfhydryl of the prosthetic group.

The protein resides in the cytoplasm. It functions in the pathway lipid metabolism; fatty acid biosynthesis. Its function is as follows. Carrier of the growing fatty acid chain in fatty acid biosynthesis. The polypeptide is Acyl carrier protein (Gluconacetobacter diazotrophicus (strain ATCC 49037 / DSM 5601 / CCUG 37298 / CIP 103539 / LMG 7603 / PAl5)).